The sequence spans 843 residues: Taste receptor type 1 member 2 (843 aa).

An N-terminal signal peptide occupies residues 1-19 (MGPQARTLCLLSLLLHVLP). The Extracellular segment spans residues 20 to 570 (KPGKLVENSD…TFLEWHEVPT (551 aa)). Asn-87, Asn-296, Asn-316, Asn-355, Asn-372, Asn-432, Asn-484, Asn-491, and Asn-531 each carry an N-linked (GlcNAc...) asparagine glycan. The chain crosses the membrane as a helical span at residues 571-591 (IVVAILAALGFFSTLAILFIF). Topologically, residues 592–606 (WRHFQTPMVRSAGGP) are cytoplasmic. Residues 607–627 (MCFLMLVPLLLAFGMVPVYVG) traverse the membrane as a helical segment. Residues 628–642 (PPTVFSCFCRQAFFT) are Extracellular-facing. Residues 643–663 (VCFSICLSCITVRSFQIVCVF) traverse the membrane as a helical segment. Over 664 to 682 (KMARRLPSAYSFWMRYHGP) the chain is Cytoplasmic. The chain crosses the membrane as a helical span at residues 683–703 (YVFVAFITAIKVALVVGNMLA). Over 704–731 (TTINPIGRTDPDDPNIMILSCHPNYRNG) the chain is Extracellular. Residues 732–752 (LLFNTSMDLLLSVLGFSFAYM) form a helical membrane-spanning segment. The Cytoplasmic portion of the chain corresponds to 753–764 (GKELPTNYNEAK). Residues 765–785 (FITLSMTFSFTSSISLCTFMS) traverse the membrane as a helical segment. The Extracellular segment spans residues 786–789 (VHDG). The chain crosses the membrane as a helical span at residues 790-810 (VLVTIMDLLVTVLNFLAIGLG). At 811-843 (YFGPKCYMILFYPERNTSAYFNSMIQGYTMRKS) the chain is on the cytoplasmic side.

The protein belongs to the G-protein coupled receptor 3 family. TAS1R subfamily. In terms of assembly, forms heterodimers with TAS1R3. In terms of tissue distribution, abundantly expressed in circumvallate and foliate papillae.

Its subcellular location is the cell membrane. Its function is as follows. Putative taste receptor. TAS1R2/TAS1R3 recognizes diverse natural and synthetic sweeteners. The sequence is that of Taste receptor type 1 member 2 (Tas1r2) from Rattus norvegicus (Rat).